A 414-amino-acid polypeptide reads, in one-letter code: Serine/threonine transporter SstT (414 aa).

Helical transmembrane passes span 16–36, 46–66, 84–104, 143–163, 180–200, 219–239, 300–320, and 332–352; these read GSLV…AWVS, LGTL…LMLV, ILFL…VFSF, ALLN…GFAL, AVTF…FGLV, LVVL…LLVF, MAGA…TLGV, and VVAS…LLLI.

Belongs to the dicarboxylate/amino acid:cation symporter (DAACS) (TC 2.A.23) family.

It localises to the cell inner membrane. It carries out the reaction L-serine(in) + Na(+)(in) = L-serine(out) + Na(+)(out). The enzyme catalyses L-threonine(in) + Na(+)(in) = L-threonine(out) + Na(+)(out). In terms of biological role, involved in the import of serine and threonine into the cell, with the concomitant import of sodium (symport system). This Salmonella arizonae (strain ATCC BAA-731 / CDC346-86 / RSK2980) protein is Serine/threonine transporter SstT.